Consider the following 266-residue polypeptide: Phosphatidylglycerol--prolipoprotein diacylglyceryl transferase (266 aa).

The next 7 membrane-spanning stretches (helical) occupy residues 21–41, 60–80, 95–115, 124–144, 176–196, 203–223, and 236–256; these read LAIR…MWLA, LLFA…VLFY, VWTG…AMLW, FFSV…MGRM, SQLY…NIFI, GAVS…IEYF, and WISM…LLML. Arginine 143 contributes to the a 1,2-diacyl-sn-glycero-3-phospho-(1'-sn-glycerol) binding site.

The protein belongs to the Lgt family.

It localises to the cell inner membrane. The catalysed reaction is L-cysteinyl-[prolipoprotein] + a 1,2-diacyl-sn-glycero-3-phospho-(1'-sn-glycerol) = an S-1,2-diacyl-sn-glyceryl-L-cysteinyl-[prolipoprotein] + sn-glycerol 1-phosphate + H(+). It functions in the pathway protein modification; lipoprotein biosynthesis (diacylglyceryl transfer). Functionally, catalyzes the transfer of the diacylglyceryl group from phosphatidylglycerol to the sulfhydryl group of the N-terminal cysteine of a prolipoprotein, the first step in the formation of mature lipoproteins. This Photobacterium profundum (strain SS9) protein is Phosphatidylglycerol--prolipoprotein diacylglyceryl transferase.